Here is a 298-residue protein sequence, read N- to C-terminus: Cyclin-C (298 aa).

Residues 46–162 (NFITAVATEC…ILDCCLVVHH (117 aa)) form the Cyclin N-terminal domain. The segment at 278-298 (KLPKPNTPIPPPQQQQSSYHM) is disordered.

The protein belongs to the cyclin family. Cyclin C subfamily. In terms of assembly, component of the Mediator complex.

The protein localises to the nucleus. Functionally, component of the Mediator complex, a coactivator involved in regulated gene transcription of nearly all RNA polymerase II-dependent genes. Mediator functions as a bridge to convey information from gene-specific regulatory proteins to the basal RNA polymerase II transcription machinery. Mediator is recruited to promoters by direct interactions with regulatory proteins and serves as a scaffold for the assembly of a functional preinitiation complex with RNA polymerase II and the general transcription factors. Binds to and activates cyclin-dependent kinase cdk-8 that phosphorylates the CTD (C-terminal domain) of the large subunit of RNA polymerase II (RNAp II), which may inhibit the formation of a transcription initiation complex. In Caenorhabditis briggsae, this protein is Cyclin-C (cic-1).